Here is a 248-residue protein sequence, read N- to C-terminus: 2,3-bisphosphoglycerate-dependent phosphoglycerate mutase (248 aa).

Substrate is bound by residues 8–15 (RHGESQWN), 21–22 (TG), arginine 60, 87–90 (ERHY), lysine 98, 114–115 (RR), and 183–184 (GN). Catalysis depends on histidine 9, which acts as the Tele-phosphohistidine intermediate. The active-site Proton donor/acceptor is the glutamate 87.

Belongs to the phosphoglycerate mutase family. BPG-dependent PGAM subfamily. In terms of assembly, homodimer.

It carries out the reaction (2R)-2-phosphoglycerate = (2R)-3-phosphoglycerate. The protein operates within carbohydrate degradation; glycolysis; pyruvate from D-glyceraldehyde 3-phosphate: step 3/5. Functionally, catalyzes the interconversion of 2-phosphoglycerate and 3-phosphoglycerate. This chain is 2,3-bisphosphoglycerate-dependent phosphoglycerate mutase, found in Teredinibacter turnerae (strain ATCC 39867 / T7901).